The following is a 216-amino-acid chain: MKLVHILFVKKKSNLNSFTTVFEISLNTKYKNLFLLGNIFRQFLLGSFEGLVINEKRFYVSHTNSLYKDFYLVNEFSLLEEVLEPFYDVWTVFDNLRFKEKFSLSKRYYARLLTYGSGEINSKDIIVPSNLSLLENKSLFTLITDSLCIDVILQILSKNGSPFNGVERVNYILENSNSGNINYNKLYLDISTRYFLSPMEALFECFRKTNLALSKM.

The protein belongs to the RNA polymerase alpha chain family. In plastids the minimal PEP RNA polymerase catalytic core is composed of four subunits: alpha, beta, beta', and beta''. When a (nuclear-encoded) sigma factor is associated with the core the holoenzyme is formed, which can initiate transcription.

The protein resides in the plastid. It localises to the chloroplast. The enzyme catalyses RNA(n) + a ribonucleoside 5'-triphosphate = RNA(n+1) + diphosphate. DNA-dependent RNA polymerase catalyzes the transcription of DNA into RNA using the four ribonucleoside triphosphates as substrates. In Euglena granulata, this protein is DNA-directed RNA polymerase subunit alpha (rpoA).